The following is a 455-amino-acid chain: Serine--tRNA ligase (455 aa).

252–254 (TAE) provides a ligand contact to L-serine. Residues 283–285 (RKE) and valine 299 each bind ATP. An L-serine-binding site is contributed by glutamate 306. 370–373 (EVVS) contacts ATP. Threonine 406 is an L-serine binding site.

It belongs to the class-II aminoacyl-tRNA synthetase family. Type-1 seryl-tRNA synthetase subfamily. In terms of assembly, homodimer. The tRNA molecule binds across the dimer.

It is found in the cytoplasm. The catalysed reaction is tRNA(Ser) + L-serine + ATP = L-seryl-tRNA(Ser) + AMP + diphosphate + H(+). The enzyme catalyses tRNA(Sec) + L-serine + ATP = L-seryl-tRNA(Sec) + AMP + diphosphate + H(+). Its pathway is aminoacyl-tRNA biosynthesis; selenocysteinyl-tRNA(Sec) biosynthesis; L-seryl-tRNA(Sec) from L-serine and tRNA(Sec): step 1/1. Its function is as follows. Catalyzes the attachment of serine to tRNA(Ser). Is also able to aminoacylate tRNA(Sec) with serine, to form the misacylated tRNA L-seryl-tRNA(Sec), which will be further converted into selenocysteinyl-tRNA(Sec). This Pyrococcus abyssi (strain GE5 / Orsay) protein is Serine--tRNA ligase.